The following is a 371-amino-acid chain: Putative RING finger protein ORF117 (371 aa).

An RING-type zinc finger spans residues cysteine 72–asparagine 108. Positions glutamate 178–valine 192 are enriched in acidic residues. The tract at residues glutamate 178–proline 218 is disordered.

The protein is Putative RING finger protein ORF117 of Magallana gigas (Pacific oyster).